The chain runs to 102 residues: uncharacterized protein (102 aa).

A disordered region spans residues 1-71; sequence MKRMIRSHGR…GSANETSACT (71 aa). At 1–79 the chain is on the extracellular side; the sequence is MKRMIRSHGR…CTRTDHQKAD (79 aa). Residues 56-71 show a composition bias toward polar residues; it reads SSGTRRGSANETSACT. The N-linked (GlcNAc...) asparagine; by host glycan is linked to asparagine 65. A helical transmembrane segment spans residues 80–97; that stretch reads IGLWFMFLVFGLCSWLAM. Topologically, residues 98-102 are cytoplasmic; the sequence is RYRAQ.

Belongs to the HHV-5 UL15A protein family.

It localises to the host membrane. This is an uncharacterized protein from Human cytomegalovirus (strain AD169) (HHV-5).